Reading from the N-terminus, the 688-residue chain is Elongation factor G (688 aa).

Residues 8-282 (KNFRNFGIMA…AVVDFLPSPV (275 aa)) form the tr-type G domain. Residues 17–24 (AHIDAGKT), 81–85 (DTPGH), and 135–138 (NKMD) each bind GTP.

It belongs to the TRAFAC class translation factor GTPase superfamily. Classic translation factor GTPase family. EF-G/EF-2 subfamily.

The protein resides in the cytoplasm. Catalyzes the GTP-dependent ribosomal translocation step during translation elongation. During this step, the ribosome changes from the pre-translocational (PRE) to the post-translocational (POST) state as the newly formed A-site-bound peptidyl-tRNA and P-site-bound deacylated tRNA move to the P and E sites, respectively. Catalyzes the coordinated movement of the two tRNA molecules, the mRNA and conformational changes in the ribosome. The sequence is that of Elongation factor G (fusA) from Mycoplasma genitalium (strain ATCC 33530 / DSM 19775 / NCTC 10195 / G37) (Mycoplasmoides genitalium).